The sequence spans 356 residues: 3-dehydroquinate synthase (356 aa).

NAD(+) is bound by residues glycine 106–aspartate 110, threonine 130–threonine 131, lysine 143, and lysine 152. Residues glutamate 185, histidine 248, and histidine 265 each coordinate Zn(2+).

It belongs to the sugar phosphate cyclases superfamily. Dehydroquinate synthase family. It depends on Co(2+) as a cofactor. Zn(2+) serves as cofactor. NAD(+) is required as a cofactor.

It localises to the cytoplasm. It carries out the reaction 7-phospho-2-dehydro-3-deoxy-D-arabino-heptonate = 3-dehydroquinate + phosphate. Its pathway is metabolic intermediate biosynthesis; chorismate biosynthesis; chorismate from D-erythrose 4-phosphate and phosphoenolpyruvate: step 2/7. Catalyzes the conversion of 3-deoxy-D-arabino-heptulosonate 7-phosphate (DAHP) to dehydroquinate (DHQ). The chain is 3-dehydroquinate synthase from Thermoanaerobacter sp. (strain X514).